Here is a 249-residue protein sequence, read N- to C-terminus: Enolase-phosphatase E1 (249 aa).

Belongs to the HAD-like hydrolase superfamily. MasA/MtnC family. In terms of assembly, monomer. Mg(2+) serves as cofactor.

The catalysed reaction is 5-methylsulfanyl-2,3-dioxopentyl phosphate + H2O = 1,2-dihydroxy-5-(methylsulfanyl)pent-1-en-3-one + phosphate. Its pathway is amino-acid biosynthesis; L-methionine biosynthesis via salvage pathway; L-methionine from S-methyl-5-thio-alpha-D-ribose 1-phosphate: step 3/6. It participates in amino-acid biosynthesis; L-methionine biosynthesis via salvage pathway; L-methionine from S-methyl-5-thio-alpha-D-ribose 1-phosphate: step 4/6. In terms of biological role, bifunctional enzyme that catalyzes the enolization of 2,3-diketo-5-methylthiopentyl-1-phosphate (DK-MTP-1-P) into the intermediate 2-hydroxy-3-keto-5-methylthiopentenyl-1-phosphate (HK-MTPenyl-1-P), which is then dephosphorylated to form the acireductone 1,2-dihydroxy-3-keto-5-methylthiopentene (DHK-MTPene). The chain is Enolase-phosphatase E1 from Synechococcus sp. (strain CC9605).